An 844-amino-acid polypeptide reads, in one-letter code: Leucine--tRNA ligase (844 aa).

The short motif at 39-49 (PYPSGRIHMGH) is the 'HIGH' region element. Positions 621-625 (KMSKS) match the 'KMSKS' region motif. Residue Lys-624 coordinates ATP.

The protein belongs to the class-I aminoacyl-tRNA synthetase family.

It is found in the cytoplasm. The enzyme catalyses tRNA(Leu) + L-leucine + ATP = L-leucyl-tRNA(Leu) + AMP + diphosphate. The sequence is that of Leucine--tRNA ligase from Paracoccus denitrificans (strain Pd 1222).